The chain runs to 251 residues: Segregation and condensation protein A (251 aa).

It belongs to the ScpA family. As to quaternary structure, component of a cohesin-like complex composed of ScpA, ScpB and the Smc homodimer, in which ScpA and ScpB bind to the head domain of Smc. The presence of the three proteins is required for the association of the complex with DNA.

It is found in the cytoplasm. Its function is as follows. Participates in chromosomal partition during cell division. May act via the formation of a condensin-like complex containing Smc and ScpB that pull DNA away from mid-cell into both cell halves. The sequence is that of Segregation and condensation protein A from Clostridium botulinum (strain Eklund 17B / Type B).